The chain runs to 337 residues: S-adenosylmethionine:tRNA ribosyltransferase-isomerase (337 aa).

Belongs to the QueA family. In terms of assembly, monomer.

The protein localises to the cytoplasm. The enzyme catalyses 7-aminomethyl-7-carbaguanosine(34) in tRNA + S-adenosyl-L-methionine = epoxyqueuosine(34) in tRNA + adenine + L-methionine + 2 H(+). It functions in the pathway tRNA modification; tRNA-queuosine biosynthesis. Its function is as follows. Transfers and isomerizes the ribose moiety from AdoMet to the 7-aminomethyl group of 7-deazaguanine (preQ1-tRNA) to give epoxyqueuosine (oQ-tRNA). The chain is S-adenosylmethionine:tRNA ribosyltransferase-isomerase from Legionella pneumophila (strain Corby).